The following is a 312-amino-acid chain: NAD-dependent protein deacylase Sirt4 (312 aa).

Residues 1-16 (MRVGQLLRFRSTSLRS) constitute a mitochondrion transit peptide. The 285-residue stretch at 28-312 (KPVVEDDIKR…FDFRNSKSVS (285 aa)) folds into the Deacetylase sirtuin-type domain. NAD(+)-binding positions include 53-73 (GAGI…VGLY) and 134-137 (QNVD). Histidine 152 acts as the Proton acceptor in catalysis. Positions 160, 163, 211, and 214 each coordinate Zn(2+). Residues 251–253 (GSS), 277–279 (NIG), and cysteine 295 each bind NAD(+).

It belongs to the sirtuin family. Class II subfamily. Requires Zn(2+) as cofactor.

It is found in the mitochondrion matrix. The enzyme catalyses N(6)-acetyl-L-lysyl-[protein] + NAD(+) + H2O = 2''-O-acetyl-ADP-D-ribose + nicotinamide + L-lysyl-[protein]. Functionally, NAD-dependent protein deacylase. Catalyzes the NAD-dependent hydrolysis of acyl groups from lysine residues. The chain is NAD-dependent protein deacylase Sirt4 (Sirt4) from Drosophila melanogaster (Fruit fly).